The sequence spans 445 residues: Tubulin beta-3 chain (445 aa).

The short motif at 1 to 4 (MREI) is the MREI motif element. The GTP site is built by Q11, E69, S138, G142, T143, G144, N204, and N226. Position 69 (E69) interacts with Mg(2+). The interval 425–445 (YQDATAEEEGEFEEEAEEEAE) is disordered. The span at 429–445 (TAEEEGEFEEEAEEEAE) shows a compositional bias: acidic residues. The residue at position 438 (E438) is a 5-glutamyl polyglutamate.

This sequence belongs to the tubulin family. In terms of assembly, dimer of alpha and beta chains. A typical microtubule is a hollow water-filled tube with an outer diameter of 25 nm and an inner diameter of 15 nM. Alpha-beta heterodimers associate head-to-tail to form protofilaments running lengthwise along the microtubule wall with the beta-tubulin subunit facing the microtubule plus end conferring a structural polarity. Microtubules usually have 13 protofilaments but different protofilament numbers can be found in some organisms and specialized cells. It depends on Mg(2+) as a cofactor. Some glutamate residues at the C-terminus are polyglycylated, resulting in polyglycine chains on the gamma-carboxyl group. Glycylation is mainly limited to tubulin incorporated into axonemes (cilia and flagella) whereas glutamylation is prevalent in neuronal cells, centrioles, axonemes, and the mitotic spindle. Both modifications can coexist on the same protein on adjacent residues, and lowering polyglycylation levels increases polyglutamylation, and reciprocally. The precise function of polyglycylation is still unclear. In terms of processing, some glutamate residues at the C-terminus are polyglutamylated, resulting in polyglutamate chains on the gamma-carboxyl group. Polyglutamylation plays a key role in microtubule severing by spastin (SPAST). SPAST preferentially recognizes and acts on microtubules decorated with short polyglutamate tails: severing activity by SPAST increases as the number of glutamates per tubulin rises from one to eight, but decreases beyond this glutamylation threshold. As to expression, highly expressed in testis.

The protein localises to the cytoplasm. It is found in the cytoskeleton. In terms of biological role, tubulin is the major constituent of microtubules, a cylinder consisting of laterally associated linear protofilaments composed of alpha- and beta-tubulin heterodimers. Microtubules grow by the addition of GTP-tubulin dimers to the microtubule end, where a stabilizing cap forms. Below the cap, tubulin dimers are in GDP-bound state, owing to GTPase activity of alpha-tubulin. TUBB3 plays a role in dorsal root ganglion axon projection towards the spinal cord. This is Tubulin beta-3 chain from Gallus gallus (Chicken).